We begin with the raw amino-acid sequence, 419 residues long: LanC-like protein 3 homolog (419 aa).

Belongs to the LanC-like protein family.

This Drosophila melanogaster (Fruit fly) protein is LanC-like protein 3 homolog.